The chain runs to 439 residues: UDP-N-acetylmuramate--L-alanine ligase (439 aa).

113-119 (GSHGKTS) is an ATP binding site.

Belongs to the MurCDEF family.

Its subcellular location is the cytoplasm. It carries out the reaction UDP-N-acetyl-alpha-D-muramate + L-alanine + ATP = UDP-N-acetyl-alpha-D-muramoyl-L-alanine + ADP + phosphate + H(+). Its pathway is cell wall biogenesis; peptidoglycan biosynthesis. Functionally, cell wall formation. This is UDP-N-acetylmuramate--L-alanine ligase from Lactobacillus delbrueckii subsp. bulgaricus (strain ATCC 11842 / DSM 20081 / BCRC 10696 / JCM 1002 / NBRC 13953 / NCIMB 11778 / NCTC 12712 / WDCM 00102 / Lb 14).